The following is a 167-amino-acid chain: Chorion class CB protein PC404 (167 aa).

The left arm stretch occupies residues 1 to 55; it reads IGREAIVGAGLQGPFGGPWPYDALSPFDMPYGPALPAMSCGAGSFGPSSGFAPAA. Residues 56–126 form a central domain region; it reads AYGGGLAVTS…GDGAVGIVAE (71 aa). The interval 127–167 is right arm; that stretch reads TPFASTSVNPAYGYGGAIGGGVPYNSYGPIGYGGCGYNALY.

It belongs to the chorion protein family.

In terms of biological role, this protein is one of many from the eggshell of the silk moth. The sequence is that of Chorion class CB protein PC404 from Antheraea polyphemus (Polyphemus moth).